We begin with the raw amino-acid sequence, 134 residues long: 6,7-dimethyl-8-ribityllumazine synthase (134 aa).

5-amino-6-(D-ribitylamino)uracil is bound by residues F12, 44–46 (VFD), and 68–70 (SVI). 73-74 (ET) is a binding site for (2S)-2-hydroxy-3-oxobutyl phosphate. H76 serves as the catalytic Proton donor. Position 101 (L101) interacts with 5-amino-6-(D-ribitylamino)uracil. R116 is a (2S)-2-hydroxy-3-oxobutyl phosphate binding site.

The protein belongs to the DMRL synthase family.

The enzyme catalyses (2S)-2-hydroxy-3-oxobutyl phosphate + 5-amino-6-(D-ribitylamino)uracil = 6,7-dimethyl-8-(1-D-ribityl)lumazine + phosphate + 2 H2O + H(+). It participates in cofactor biosynthesis; riboflavin biosynthesis; riboflavin from 2-hydroxy-3-oxobutyl phosphate and 5-amino-6-(D-ribitylamino)uracil: step 1/2. Functionally, catalyzes the formation of 6,7-dimethyl-8-ribityllumazine by condensation of 5-amino-6-(D-ribitylamino)uracil with 3,4-dihydroxy-2-butanone 4-phosphate. This is the penultimate step in the biosynthesis of riboflavin. The chain is 6,7-dimethyl-8-ribityllumazine synthase from Methanosarcina mazei (strain ATCC BAA-159 / DSM 3647 / Goe1 / Go1 / JCM 11833 / OCM 88) (Methanosarcina frisia).